We begin with the raw amino-acid sequence, 622 residues long: C6 finger transcription factor fumR (622 aa).

The zn(2)-C6 fungal-type DNA-binding region spans 94–123 (CDRCHGQKLRCRRENNSDTCVRCARAGVRC). 4 disordered regions span residues 127 to 175 (PMRL…HSDH), 206 to 248 (ALTA…APNL), 299 to 360 (FDQA…SNSI), and 556 to 585 (PATG…DAGD). 3 stretches are compositionally biased toward polar residues: residues 148–167 (PANG…GPND), 217–226 (VHTSQPSGPQ), and 347–360 (RGNS…SNSI). Over residues 556-571 (PATGSASKTAASGPPA) the composition is skewed to low complexity.

It is found in the nucleus. Transcription factor that regulates the expression of the gene clusters that mediate the biosynthesis of pseurotin and fumagillin. This chain is C6 finger transcription factor fumR, found in Aspergillus fumigatus (strain ATCC MYA-4609 / CBS 101355 / FGSC A1100 / Af293) (Neosartorya fumigata).